Here is a 301-residue protein sequence, read N- to C-terminus: Tegument protein VP22 (301 aa).

The tract at residues 1 to 171 (MTSRRSVKSG…PTRSKTPAQG (171 aa)) is disordered. Over residues 113–124 (RTPTTAPRAPRT) the composition is skewed to low complexity. Residues 163-166 (TRSK) carry the Nuclear localization signal motif. Residues 174 to 267 (RKLHFSTAPP…LVNPDVVQDV (94 aa)) form an interaction with gE region. Positions 232-244 (LNELLGITTIRVT) match the Nuclear export signal motif. Residues 269–281 (AATATRGRSAASR) are compositionally biased toward low complexity. Residues 269–301 (AATATRGRSAASRPTERPRAPARSASRPRRPVE) are disordered.

Belongs to the alphaherpesvirinae VP22 tegument protein family. As to quaternary structure, interacts with gE (via C-terminus); this interaction is necessary for the recruitment of VP22 to the Golgi and its packaging into virions. Interacts with gM (via C-terminus). Interacts with VP16; this interaction allows the formation of a tripartite complex composed of VP16, VP22 and UL41/VHS. According to a report interacts with gD (via C-terminus). According another publication, does not interact with gD. Interacts with host CGAS. Interacts with host SET; this interaction may interfere with SET-mediated nucleosomal deposition onto the viral genome. Interacts with the capsid-binding protein UL16. Post-translationally, highly phosphorylated in the host cell. Packaging is selective for underphosphorylated forms.

The protein resides in the virion tegument. Its subcellular location is the host cytoplasm. It localises to the host nucleus. It is found in the host Golgi apparatus. Its function is as follows. Tegument protein that plays different roles during the time course of infection. Participates in both the accumulation of viral mRNAs and viral protein translation at late time of infection. Modulates the RNase activity of the virion host shutoff protein UL41 probably to ensure necessary levels of key cellular mRNAs and proteins. Plays a role in microtubule reorganization that occurs after viral infection by stabilizing microtubule network. Finally, may prevent nucleosomal deposition onto the viral genome by interacting with and inhibiting host SET. Plays a role in the inhibition of host innate immune system by targeting the CGAS enzymatic activity which is the principal cytosolic DNA sensor that detects invading viral DNA. Acts by mediating disruption of liquid-like droplets in which CGAS is activated, thereby preventing CGAS activity. The chain is Tegument protein VP22 from Human herpesvirus 1 (strain 17) (HHV-1).